Reading from the N-terminus, the 91-residue chain is Small integral membrane protein 12-B (91 aa).

A helical membrane pass occupies residues Tyr12 to Phe34.

The protein belongs to the SMIM12 family.

Its subcellular location is the membrane. The sequence is that of Small integral membrane protein 12-B (smim12-b) from Xenopus laevis (African clawed frog).